The sequence spans 57 residues: UPF0391 membrane protein RPC_2356 (57 aa).

Transmembrane regions (helical) follow at residues tryptophan 6–serine 26 and isoleucine 35–phenylalanine 55.

Belongs to the UPF0391 family.

It is found in the cell membrane. This is UPF0391 membrane protein RPC_2356 from Rhodopseudomonas palustris (strain BisB18).